Reading from the N-terminus, the 307-residue chain is GTPase Era (307 aa).

Residues 17–186 (RCGFVAIVGR…LELIKPYLPE (170 aa)) form the Era-type G domain. The segment at 25-32 (GRPNVGKS) is G1. 25–32 (GRPNVGKS) provides a ligand contact to GTP. Residues 51–55 (QTTRN) form a G2 region. The tract at residues 72–75 (DTPG) is G3. Residues 72 to 76 (DTPGF) and 133 to 136 (NKID) each bind GTP. Residues 133–136 (NKID) form a G4 region. Residues 165 to 167 (VSA) form a G5 region. A KH type-2 domain is found at 217–293 (LGEELPYAMN…FLKVWVKVKS (77 aa)).

Belongs to the TRAFAC class TrmE-Era-EngA-EngB-Septin-like GTPase superfamily. Era GTPase family. Monomer.

The protein resides in the cytoplasm. It is found in the cell inner membrane. In terms of biological role, an essential GTPase that binds both GDP and GTP, with rapid nucleotide exchange. Plays a role in 16S rRNA processing and 30S ribosomal subunit biogenesis and possibly also in cell cycle regulation and energy metabolism. The sequence is that of GTPase Era from Neisseria meningitidis serogroup B (strain ATCC BAA-335 / MC58).